Reading from the N-terminus, the 406-residue chain is Probable tRNA sulfurtransferase (406 aa).

The THUMP domain occupies 60–162 (PEAKARLQDT…PGAALLEVER (103 aa)). ATP contacts are provided by residues 180–181 (LL), 205–206 (HF), Arg-262, Gly-284, and Gln-293.

It belongs to the ThiI family.

The protein resides in the cytoplasm. The enzyme catalyses [ThiI sulfur-carrier protein]-S-sulfanyl-L-cysteine + a uridine in tRNA + 2 reduced [2Fe-2S]-[ferredoxin] + ATP + H(+) = [ThiI sulfur-carrier protein]-L-cysteine + a 4-thiouridine in tRNA + 2 oxidized [2Fe-2S]-[ferredoxin] + AMP + diphosphate. It carries out the reaction [ThiS sulfur-carrier protein]-C-terminal Gly-Gly-AMP + S-sulfanyl-L-cysteinyl-[cysteine desulfurase] + AH2 = [ThiS sulfur-carrier protein]-C-terminal-Gly-aminoethanethioate + L-cysteinyl-[cysteine desulfurase] + A + AMP + 2 H(+). Its pathway is cofactor biosynthesis; thiamine diphosphate biosynthesis. Functionally, catalyzes the ATP-dependent transfer of a sulfur to tRNA to produce 4-thiouridine in position 8 of tRNAs, which functions as a near-UV photosensor. Also catalyzes the transfer of sulfur to the sulfur carrier protein ThiS, forming ThiS-thiocarboxylate. This is a step in the synthesis of thiazole, in the thiamine biosynthesis pathway. The sulfur is donated as persulfide by IscS. In Thermus thermophilus (strain ATCC 27634 / DSM 579 / HB8), this protein is Probable tRNA sulfurtransferase.